The primary structure comprises 307 residues: Nitric oxide synthase-interacting protein homolog (307 aa).

Residues 120–159 (PAMTPAHSSAAASEKPSTSSAAAAASSESSSASSISNMTN) form a disordered region. Residues 127 to 155 (SSAAASEKPSTSSAAAAASSESSSASSIS) show a composition bias toward low complexity.

It belongs to the NOSIP family.

It localises to the cytoplasm. The protein resides in the nucleus. Negatively regulates nitric oxide production by inducing nitric oxide synthase translocation to actin cytoskeleton and inhibiting its enzymatic activity. The polypeptide is Nitric oxide synthase-interacting protein homolog (Drosophila melanogaster (Fruit fly)).